A 206-amino-acid polypeptide reads, in one-letter code: Ras-related protein RABG3d (206 aa).

GTP is bound at residue 15–22 (GDSGVGKT). Residues 37–45 (YKATIGADF) carry the Effector region motif. Residues 63–67 (DTAGQ), 125–128 (NKTD), and 158–159 (SA) each bind GTP. Residues cysteine 204 and cysteine 206 are each lipidated (S-geranylgeranyl cysteine). Cysteine 206 carries the post-translational modification Cysteine methyl ester.

This sequence belongs to the small GTPase superfamily. Rab family.

It localises to the cell membrane. Functionally, intracellular vesicle trafficking and protein transport. The polypeptide is Ras-related protein RABG3d (RABG3D) (Arabidopsis thaliana (Mouse-ear cress)).